Reading from the N-terminus, the 529-residue chain is Apolipoprotein N-acyltransferase (529 aa).

5 helical membrane passes run 8 to 28 (VMLA…AVGA), 66 to 86 (ILPA…AGLW), 105 to 125 (LAIL…VAAA), 178 to 198 (LLGL…PALI), and 203 to 223 (GMGP…GYGF). In terms of domain architecture, CN hydrolase spans 242 to 491 (VQPAIDQSRK…VGILDATLSG (250 aa)). Glu286 serves as the catalytic Proton acceptor. Lys350 is a catalytic residue. Cys403 functions as the Nucleophile in the catalytic mechanism. The helical transmembrane segment at 505–525 (YFWLIFSILMIVAVFPALSFA) threads the bilayer.

This sequence belongs to the CN hydrolase family. Apolipoprotein N-acyltransferase subfamily.

The protein localises to the cell inner membrane. The catalysed reaction is N-terminal S-1,2-diacyl-sn-glyceryl-L-cysteinyl-[lipoprotein] + a glycerophospholipid = N-acyl-S-1,2-diacyl-sn-glyceryl-L-cysteinyl-[lipoprotein] + a 2-acyl-sn-glycero-3-phospholipid + H(+). The protein operates within protein modification; lipoprotein biosynthesis (N-acyl transfer). In terms of biological role, catalyzes the phospholipid dependent N-acylation of the N-terminal cysteine of apolipoprotein, the last step in lipoprotein maturation. This Agrobacterium fabrum (strain C58 / ATCC 33970) (Agrobacterium tumefaciens (strain C58)) protein is Apolipoprotein N-acyltransferase.